We begin with the raw amino-acid sequence, 493 residues long: Glutamyl-tRNA(Gln) amidotransferase subunit A (493 aa).

Residues K79 and S159 each act as charge relay system in the active site. S183 functions as the Acyl-ester intermediate in the catalytic mechanism.

It belongs to the amidase family. GatA subfamily. As to quaternary structure, heterotrimer of A, B and C subunits.

It carries out the reaction L-glutamyl-tRNA(Gln) + L-glutamine + ATP + H2O = L-glutaminyl-tRNA(Gln) + L-glutamate + ADP + phosphate + H(+). Its function is as follows. Allows the formation of correctly charged Gln-tRNA(Gln) through the transamidation of misacylated Glu-tRNA(Gln) in organisms which lack glutaminyl-tRNA synthetase. The reaction takes place in the presence of glutamine and ATP through an activated gamma-phospho-Glu-tRNA(Gln). In Brucella canis (strain ATCC 23365 / NCTC 10854 / RM-666), this protein is Glutamyl-tRNA(Gln) amidotransferase subunit A.